The primary structure comprises 438 residues: Glutamyl-tRNA reductase (438 aa).

Substrate is bound by residues 49-52 (TCNR), serine 109, 114-116 (EGQ), and glutamine 120. The active-site Nucleophile is cysteine 50. 198 to 203 (GAGRMS) contributes to the NADP(+) binding site.

It belongs to the glutamyl-tRNA reductase family. In terms of assembly, homodimer.

The catalysed reaction is (S)-4-amino-5-oxopentanoate + tRNA(Glu) + NADP(+) = L-glutamyl-tRNA(Glu) + NADPH + H(+). The protein operates within porphyrin-containing compound metabolism; protoporphyrin-IX biosynthesis; 5-aminolevulinate from L-glutamyl-tRNA(Glu): step 1/2. It participates in porphyrin-containing compound metabolism; chlorophyll biosynthesis. Functionally, catalyzes the NADPH-dependent reduction of glutamyl-tRNA(Glu) to glutamate 1-semialdehyde (GSA). This Synechococcus sp. (strain WH7803) protein is Glutamyl-tRNA reductase.